A 358-amino-acid polypeptide reads, in one-letter code: Peptide chain release factor 1 (358 aa).

Q233 is modified (N5-methylglutamine).

This sequence belongs to the prokaryotic/mitochondrial release factor family. In terms of processing, methylated by PrmC. Methylation increases the termination efficiency of RF1.

The protein resides in the cytoplasm. Its function is as follows. Peptide chain release factor 1 directs the termination of translation in response to the peptide chain termination codons UAG and UAA. This is Peptide chain release factor 1 from Agathobacter rectalis (strain ATCC 33656 / DSM 3377 / JCM 17463 / KCTC 5835 / VPI 0990) (Eubacterium rectale).